The chain runs to 193 residues: AP-3 complex subunit sigma-2 (193 aa).

The protein belongs to the adaptor complexes small subunit family. As to quaternary structure, adaptor protein complex 3 (AP-3) is a heterotetramer composed of two large adaptins (delta-type subunit AP3D1 and beta-type subunit AP3B1 or AP3B2), a medium adaptin (mu-type subunit AP3M1 or AP3M2) and a small adaptin (sigma-type subunit APS1 or AP3S2). Interacts with AGAP1. AP-3 associates with the BLOC-1 complex.

It localises to the golgi apparatus. Its subcellular location is the cytoplasmic vesicle membrane. Functionally, part of the AP-3 complex, an adaptor-related complex which is not clathrin-associated. The complex is associated with the Golgi region as well as more peripheral structures. It facilitates the budding of vesicles from the Golgi membrane and may be directly involved in trafficking to lysosomes. In concert with the BLOC-1 complex, AP-3 is required to target cargos into vesicles assembled at cell bodies for delivery into neurites and nerve terminals. This Bos taurus (Bovine) protein is AP-3 complex subunit sigma-2 (AP3S2).